A 161-amino-acid polypeptide reads, in one-letter code: Ribosomal RNA large subunit methyltransferase H (161 aa).

S-adenosyl-L-methionine contacts are provided by residues Leu78, Gly110, and 129-134 (LGRMTF).

The protein belongs to the RNA methyltransferase RlmH family. In terms of assembly, homodimer.

It is found in the cytoplasm. It catalyses the reaction pseudouridine(1915) in 23S rRNA + S-adenosyl-L-methionine = N(3)-methylpseudouridine(1915) in 23S rRNA + S-adenosyl-L-homocysteine + H(+). Specifically methylates the pseudouridine at position 1915 (m3Psi1915) in 23S rRNA. This Symbiobacterium thermophilum (strain DSM 24528 / JCM 14929 / IAM 14863 / T) protein is Ribosomal RNA large subunit methyltransferase H.